The primary structure comprises 395 residues: G-protein coupled receptor 182 (395 aa).

The Extracellular segment spans residues 1 to 53 (MSVIPSSRPVSTLAPDNDFREIHNWTELLHLFNQTFSDCHMELNENTKQVVLF). N-linked (GlcNAc...) asparagine glycans are attached at residues asparagine 24 and asparagine 33. The helical transmembrane segment at 54–75 (VFYLAIFVVGLVENVLVICVNC) threads the bilayer. Topologically, residues 76-86 (RRSGRVGMLNL) are cytoplasmic. Residues 87-109 (YILNMAVADLGIILSLPVWMLEV) form a helical membrane-spanning segment. Residues 110–123 (MLEYTWLWGSFSCR) are Extracellular-facing. Cysteine 122 and cysteine 198 are joined by a disulfide. Residues 124-145 (FIHYFYLANMYSSIFFLTCLSI) form a helical membrane-spanning segment. Residues 146–166 (DRYVTLTNTSPSWQRHQHRIR) are Cytoplasmic-facing. The helical transmembrane segment at 167-189 (RAVCAGVWVLSAIIPLPEVVHIQ) threads the bilayer. Residues 190–213 (LLDGSEPMCLFLAPFETYSAWALA) lie on the Extracellular side of the membrane. The chain crosses the membrane as a helical span at residues 214 to 235 (VALSATILGFLLPFPLIAVFNI). Residues 236 to 254 (LSACRLRRQGQTESRRHCL) lie on the Cytoplasmic side of the membrane. A helical membrane pass occupies residues 255–276 (LMWAYIVVFVICWLPYHVTMLL). At 277–295 (LTLHTTHIFLHCNLVNFLY) the chain is on the extracellular side. Residues 296–316 (FFYEIIDCFSMLHCVANPILY) traverse the membrane as a helical segment. The Cytoplasmic segment spans residues 317 to 395 (NFLSPSFRGR…RTPHLHSAIP (79 aa)). Serine 329 carries the post-translational modification Phosphoserine.

It belongs to the G-protein coupled receptor 1 family. Expressed in a wide variety of peripheral tissues in the adult rat with prominent expression in lung, testis, adrenal and liver.

It is found in the cell membrane. Its function is as follows. Orphan receptor. This Rattus norvegicus (Rat) protein is G-protein coupled receptor 182 (Gpr182).